The following is a 272-amino-acid chain: NADH-cytochrome b5 reductase 3 (272 aa).

Residues 11–123 form the FAD-binding FR-type domain; it reads DIKYPLRLID…RGPNGLLVYQ (113 aa). Lys-13 bears the N6-acetyllysine mark. The residue at position 14 (Tyr-14) is a Phosphotyrosine. Lys-21 carries the N6-acetyllysine modification. FAD-binding residues include Arg-63, Pro-64, Tyr-65, Val-80, Lys-82, and Tyr-84. An N6-acetyllysine modification is found at Lys-91. FAD contacts are provided by Lys-97, Met-98, Ser-99, and Thr-156.

This sequence belongs to the flavoprotein pyridine nucleotide cytochrome reductase family. Component of a complex composed of cytochrome b5, NADH-cytochrome b5 reductase (CYB5R3) and MTARC2. Interacts with MTLN; the interaction is required to maintain cellular lipid composition and leads to stimulation of mitochondrial respiratory complex I activity. The cofactor is FAD.

It is found in the endoplasmic reticulum membrane. The protein resides in the mitochondrion outer membrane. It catalyses the reaction 2 Fe(III)-[cytochrome b5] + NADH = 2 Fe(II)-[cytochrome b5] + NAD(+) + H(+). Functionally, catalyzes the reduction of two molecules of cytochrome b5 using NADH as the electron donor. This Sus scrofa (Pig) protein is NADH-cytochrome b5 reductase 3 (CYB5R3).